A 295-amino-acid polypeptide reads, in one-letter code: ATP synthase gamma chain (295 aa).

The protein belongs to the ATPase gamma chain family. As to quaternary structure, F-type ATPases have 2 components, CF(1) - the catalytic core - and CF(0) - the membrane proton channel. CF(1) has five subunits: alpha(3), beta(3), gamma(1), delta(1), epsilon(1). CF(0) has three main subunits: a, b and c.

The protein localises to the cell inner membrane. Produces ATP from ADP in the presence of a proton gradient across the membrane. The gamma chain is believed to be important in regulating ATPase activity and the flow of protons through the CF(0) complex. The chain is ATP synthase gamma chain from Bdellovibrio bacteriovorus (strain ATCC 15356 / DSM 50701 / NCIMB 9529 / HD100).